The chain runs to 252 residues: uncharacterized protein (252 aa).

16 to 40 (LVTGASDGIGREAAMTYARYGATVI) provides a ligand contact to NADP(+). Ser152 is a binding site for substrate. The active-site Proton acceptor is Tyr165.

Belongs to the short-chain dehydrogenases/reductases (SDR) family.

This is an uncharacterized protein from Escherichia coli (strain K12).